The chain runs to 256 residues: DNA repair protein RecO (256 aa).

This sequence belongs to the RecO family.

Involved in DNA repair and RecF pathway recombination. In Nocardia farcinica (strain IFM 10152), this protein is DNA repair protein RecO.